Here is a 195-residue protein sequence, read N- to C-terminus: Imidazoleglycerol-phosphate dehydratase (195 aa).

Belongs to the imidazoleglycerol-phosphate dehydratase family.

The protein resides in the cytoplasm. The catalysed reaction is D-erythro-1-(imidazol-4-yl)glycerol 3-phosphate = 3-(imidazol-4-yl)-2-oxopropyl phosphate + H2O. Its pathway is amino-acid biosynthesis; L-histidine biosynthesis; L-histidine from 5-phospho-alpha-D-ribose 1-diphosphate: step 6/9. This chain is Imidazoleglycerol-phosphate dehydratase, found in Methanosphaerula palustris (strain ATCC BAA-1556 / DSM 19958 / E1-9c).